Here is a 300-residue protein sequence, read N- to C-terminus: Probable protein phosphatase 2C 3 (300 aa).

Positions 23-298 constitute a PPM-type phosphatase domain; the sequence is IFAASEMQGW…DNMTTILVYL (276 aa). The Mn(2+) site is built by aspartate 57, glycine 58, aspartate 237, and aspartate 289.

The protein belongs to the PP2C family. Mg(2+) is required as a cofactor. It depends on Mn(2+) as a cofactor.

Its subcellular location is the membrane. It carries out the reaction O-phospho-L-seryl-[protein] + H2O = L-seryl-[protein] + phosphate. It catalyses the reaction O-phospho-L-threonyl-[protein] + H2O = L-threonyl-[protein] + phosphate. Enzyme with a broad specificity. This Paramecium tetraurelia protein is Probable protein phosphatase 2C 3.